A 270-amino-acid chain; its full sequence is tRNA pseudouridine synthase A (270 aa).

The active-site Nucleophile is D51. Y109 provides a ligand contact to substrate.

This sequence belongs to the tRNA pseudouridine synthase TruA family. In terms of assembly, homodimer.

The enzyme catalyses uridine(38/39/40) in tRNA = pseudouridine(38/39/40) in tRNA. Its function is as follows. Formation of pseudouridine at positions 38, 39 and 40 in the anticodon stem and loop of transfer RNAs. The protein is tRNA pseudouridine synthase A of Burkholderia vietnamiensis (strain G4 / LMG 22486) (Burkholderia cepacia (strain R1808)).